Here is a 2200-residue protein sequence, read N- to C-terminus: Non-reducing polyketide synthase tpeB (2200 aa).

The Starter acyltransferase (SAT) domain occupies 16–255; the sequence is FFGDQTVDTL…MDLPLGTPAH (240 aa). Positions 382-815 constitute a Ketosynthase family 3 (KS3) domain; sequence SNMIAIVGQS…GGNNCVLLEE (434 aa). Catalysis depends on for beta-ketoacyl synthase activity residues C554, H690, and H729. Positions 914–1202 constitute a Malonyl-CoA:ACP transacylase (MAT) domain; sequence VFAFTGQGSQ…VLNSFIKATL (289 aa). The interval 1296 to 1621 is product template (PT) domain; that stretch reads TASLQRVREE…TKRILTTILG (326 aa). Positions 1300–1433 are N-terminal hotdog fold; that stretch reads QRVREERIQG…CKIRFESKAD (134 aa). A PKS/mFAS DH domain is found at 1300–1617; that stretch reads QRVREERIQG…FQRLTKRILT (318 aa). Catalysis depends on H1332, which acts as the Proton acceptor; for dehydratase activity. The interval 1462 to 1617 is C-terminal hotdog fold; it reads NGHKLPKPVV…FQRLTKRILT (156 aa). D1522 functions as the Proton donor; for dehydratase activity in the catalytic mechanism. Residues 1625-1652 form a disordered region; that stretch reads DHHNSNEVRNGNATTTHTNPPAHATTQS. A compositionally biased stretch (low complexity) spans 1636–1650; that stretch reads NATTTHTNPPAHATT. Carrier domains lie at 1671–1748 and 1791–1865; these read TVGE…AELP and ANYA…GPNT. 2 positions are modified to O-(pantetheine 4'-phosphoryl)serine: S1708 and S1825. Residues 1931–2173 are thioesterase (TE) domain; the sequence is MFFLPDGTGY…TVPCDHLSIM (243 aa).

Pantetheine 4'-phosphate serves as cofactor.

The protein operates within secondary metabolite biosynthesis. Non-reducing polyketide synthase; part of the gene cluster that mediates the biosynthesis of polyesters containing 2,4-dihydroxy-6-(2-hydroxypropyl)benzoate and 3-hydroxybutyrate moieties, such as talapolyester G, 15G256beta and 15G256beta-2; as well as to oxidized derivatives such as 15G256alpha. The biosynthesis of the polyesters probably starts with the formation of the diketide 3-hydroxybutyryl-S-ACP catalyzed by the partially reducing polyketide synthase tpeA. The acceptance of 3-hydroxybutyryl by the non-reducing polyketide synthase tpeB would initiate further elongation and cyclization, catalyzed by KS and PT, respectively, to form 2,4-dihydroxy-6-(2-hydroxyn-propyl)benzoyl-S-ACP intermediate. The TE domain could catalyze lactonization at this step to yield 6-hydroxymellein as a derailment product. The polyesterification process maybe occurs when additional molecules of 3-hydroxybutyryl are transferred to tpeB. Following the first esterification step, an intramolecular cyclization catalyzed by the TE domain of tpeB would give talarodioxadione 1, whereas the ethyl esterification of talapolyester G perhaps happens spontaneously. Further oxidation by the cytochrome P450 monooxygenase tpeC then leads to the formation of oxidized derivatives. This is Non-reducing polyketide synthase tpeB from Talaromyces stipitatus (strain ATCC 10500 / CBS 375.48 / QM 6759 / NRRL 1006) (Penicillium stipitatum).